The chain runs to 104 residues: Large ribosomal subunit protein uL23 (104 aa).

It belongs to the universal ribosomal protein uL23 family. As to quaternary structure, part of the 50S ribosomal subunit. Contacts protein L29, and trigger factor when it is bound to the ribosome.

One of the early assembly proteins it binds 23S rRNA. One of the proteins that surrounds the polypeptide exit tunnel on the outside of the ribosome. Forms the main docking site for trigger factor binding to the ribosome. The chain is Large ribosomal subunit protein uL23 from Paraburkholderia phymatum (strain DSM 17167 / CIP 108236 / LMG 21445 / STM815) (Burkholderia phymatum).